Consider the following 577-residue polypeptide: Cleavage stimulation factor subunit 2 (577 aa).

S14 carries the phosphoserine modification. The 79-residue stretch at 16–94 (RSVFVGNIPY…RALRVDNAAS (79 aa)) folds into the RRM domain. The interactions with CSTF3 and SYMPK stretch occupies residues 108–248 (APVIESPYGE…VNGAPPLMQA (141 aa)). Residue K189 forms a Glycyl lysine isopeptide (Lys-Gly) (interchain with G-Cter in SUMO2) linkage. The interval 206-243 (QPVHGAGPGSGSNVSMNQQNPQAPQAQSLGGMHVNGAP) is disordered. The span at 222 to 232 (NQQNPQAPQAQ) shows a compositional bias: low complexity. At R308 the chain carries Omega-N-methylarginine. Positions 340–409 (EVEPRGYLGP…DGRGGRDPRG (70 aa)) are disordered. Basic and acidic residues predominate over residues 360–373 (PGHESRGPPPHELR). The 1; approximate repeat unit spans residues 410 to 414 (IDARG). The interval 410-469 (IDARGMEARAMEARGLDARGLEARAMEARAMEARAMEARAMEARAMEVRGMEARGMDTRG) is 12 X 5 AA tandem repeats of M-E-A-R-[AG]. 2 tandem repeats follow at residues 415 to 419 (MEARA) and 420 to 424 (MEARG). The 4; approximate repeat unit spans residues 425–429 (LDARG). The stretch at 430–434 (LEARA) is one 5; approximate repeat. 4 consecutive repeat copies span residues 435-439 (MEARA), 440-444 (MEARA), 445-449 (MEARA), and 450-454 (MEARA). The stretch at 455 to 459 (MEVRG) is one 10; approximate repeat. Repeat unit 11 spans residues 460-464 (MEARG). Residues 465-469 (MDTRG) form a 12; approximate repeat. 2 positions are modified to omega-N-methylarginine: R468 and R475. The segment at 508–532 (GMQGASIQGGSQPGGFSPGQNQVTP) is disordered. Residues 514 to 577 (IQGGSQPGGF…EQIQKSTGAP (64 aa)) are interaction with RPO2TC1. A phosphoserine mark is found at S518 and S524.

As to quaternary structure, the CSTF complex is composed of CSTF1 (50 kDa subunit), CSTF2 (64 kDa subunit) and CSTF3 (77 kDa subunit). CSTF2 directly interacts with CSTF3, SYMPK and RPO2TC1. Interacts with HSF1 in heat-stressed cells. Interacts with CPSF2, CPSF3 and FIP1L1. Interacts with DDX1.

It is found in the nucleus. In terms of biological role, one of the multiple factors required for polyadenylation and 3'-end cleavage of mammalian pre-mRNAs. This subunit is directly involved in the binding to pre-mRNAs. This is Cleavage stimulation factor subunit 2 (CSTF2) from Homo sapiens (Human).